The following is a 92-amino-acid chain: Transcription factor PRE4 (92 aa).

The bHLH domain occupies 5–60 (KSRSRQTGASMITDEQINDLVLQLHRLLPELANNRRSGKVSASRVLQETCSYIRNL).

It belongs to the bHLH protein family. In terms of assembly, interacts with HFR1 and IBH1. In terms of tissue distribution, expressed in roots, leaves, stems and flowers.

The protein resides in the nucleus. In terms of biological role, atypical and probable non DNA-binding bHLH transcription factor that integrates multiple signaling pathways to regulate cell elongation and plant development. Regulates light responses by binding and inhibiting the activity of the bHLH transcription factor HFR1, a critical regulator of light signaling and shade avoidance. May have a regulatory role in various aspects of gibberellin-dependent growth and development. This is Transcription factor PRE4 (PRE4) from Arabidopsis thaliana (Mouse-ear cress).